Reading from the N-terminus, the 578-residue chain is tRNA (guanine(26)-N(2))-dimethyltransferase (578 aa).

The Trm1 methyltransferase domain maps to 18-451; that stretch reads NVIRERNAEI…APPAVLWDIL (434 aa). Position 43 (R43) interacts with S-adenosyl-L-methionine. A disordered region spans residues 63–92; sequence EKALKKQRKKVKEQEDEKTTPVPEDPPVYE. R113 and D131 together coordinate S-adenosyl-L-methionine. Positions 295, 298, 335, and 338 each coordinate Zn(2+). The interval 491 to 578 is disordered; it reads EANPKSRKSA…PKQPKLEATA (88 aa). Residues 564–578 are compositionally biased toward basic and acidic residues; it reads DVEHLPKQPKLEATA.

Belongs to the class I-like SAM-binding methyltransferase superfamily. Trm1 family.

It carries out the reaction guanosine(26) in tRNA + 2 S-adenosyl-L-methionine = N(2)-dimethylguanosine(26) in tRNA + 2 S-adenosyl-L-homocysteine + 2 H(+). Dimethylates a single guanine residue at position 26 of most tRNAs using S-adenosyl-L-methionine as donor of the methyl groups. This Drosophila melanogaster (Fruit fly) protein is tRNA (guanine(26)-N(2))-dimethyltransferase.